A 179-amino-acid polypeptide reads, in one-letter code: MNLNSVPAGEKLPNDIYAIIEIPTNSNPIKYEVDKKTGILFVNRFIPTSMFYPCNYGYINHTISLDGDPLDILVPTPYPVLHGSVIRCNPIGVLKMIDESGEDAKIIAMPHQKLLAGYNNNIKNIDDISNLMKSQISHFFEHYKDLEKKKWTKVISWEDVKSAEKEILSSFNRKKTLNI.

Substrate is bound by residues Lys-30, Arg-44, and Tyr-56. The Mg(2+) site is built by Asp-66, Asp-71, and Asp-103. Residue Tyr-143 participates in substrate binding.

This sequence belongs to the PPase family. As to quaternary structure, homohexamer. Mg(2+) is required as a cofactor.

The protein localises to the cytoplasm. It catalyses the reaction diphosphate + H2O = 2 phosphate + H(+). Its function is as follows. Catalyzes the hydrolysis of inorganic pyrophosphate (PPi) forming two phosphate ions. In Wigglesworthia glossinidia brevipalpis, this protein is Inorganic pyrophosphatase.